Consider the following 180-residue polypeptide: tRNA (cytidine(56)-2'-O)-methyltransferase (180 aa).

S-adenosyl-L-methionine contacts are provided by residues L84 and 112 to 116; that span reads GAEKV.

The protein belongs to the aTrm56 family. In terms of assembly, homodimer.

It localises to the cytoplasm. The enzyme catalyses cytidine(56) in tRNA + S-adenosyl-L-methionine = 2'-O-methylcytidine(56) in tRNA + S-adenosyl-L-homocysteine + H(+). Its function is as follows. Specifically catalyzes the AdoMet-dependent 2'-O-ribose methylation of cytidine at position 56 in tRNAs. In Natronomonas pharaonis (strain ATCC 35678 / DSM 2160 / CIP 103997 / JCM 8858 / NBRC 14720 / NCIMB 2260 / Gabara) (Halobacterium pharaonis), this protein is tRNA (cytidine(56)-2'-O)-methyltransferase.